A 501-amino-acid polypeptide reads, in one-letter code: Isoflavone 3'-hydroxylase (501 aa).

A helical membrane pass occupies residues 7-24; the sequence is LLSLSFIITIKILLKITS. Position 439 (Cys-439) interacts with heme.

This sequence belongs to the cytochrome P450 family. Heme is required as a cofactor. Expressed constitutively in leaves and stems, but not in roots.

Its subcellular location is the endoplasmic reticulum membrane. The enzyme catalyses formononetin + reduced [NADPH--hemoprotein reductase] + O2 = calycosin + oxidized [NADPH--hemoprotein reductase] + H2O + H(+). In terms of biological role, involved in the biosynthesis of the pterocarpin phytoalexins. Acts on isoflavones with a 4'-methoxy group on the B-ring, such as biochanin A, formononetin and 2'-hydroxyformononetin. Has a low activity with daidzein and pseudobaptigenin, and no activity with the 7-O-methylated isoflavonoids isoformononetin and prunetin. In Medicago truncatula (Barrel medic), this protein is Isoflavone 3'-hydroxylase.